Reading from the N-terminus, the 627-residue chain is Membrane protein insertase YidC (627 aa).

6 helical membrane-spanning segments follow: residues 3–23 (KNTV…SWLN), 376–396 (WGLI…PLAY), 450–470 (LPML…PTTI), 502–522 (FYGN…ILYI), 534–554 (EGMA…LFFF), and 558–578 (ASGL…QYMS).

This sequence belongs to the OXA1/ALB3/YidC family. Type 1 subfamily. In terms of assembly, interacts with the Sec translocase complex via SecD. Specifically interacts with transmembrane segments of nascent integral membrane proteins during membrane integration.

The protein localises to the cell inner membrane. Its function is as follows. Required for the insertion and/or proper folding and/or complex formation of integral membrane proteins into the membrane. Involved in integration of membrane proteins that insert both dependently and independently of the Sec translocase complex, as well as at least some lipoproteins. Aids folding of multispanning membrane proteins. This is Membrane protein insertase YidC from Porphyromonas gingivalis (strain ATCC 33277 / DSM 20709 / CIP 103683 / JCM 12257 / NCTC 11834 / 2561).